A 750-amino-acid polypeptide reads, in one-letter code: Ribosomal RNA large subunit methyltransferase K/L (750 aa).

The 112-residue stretch at 46-157 folds into the THUMP domain; sequence TAYRLCLWSR…RGEAILSLDL (112 aa).

It belongs to the methyltransferase superfamily. RlmKL family.

It is found in the cytoplasm. It catalyses the reaction guanosine(2445) in 23S rRNA + S-adenosyl-L-methionine = N(2)-methylguanosine(2445) in 23S rRNA + S-adenosyl-L-homocysteine + H(+). It carries out the reaction guanosine(2069) in 23S rRNA + S-adenosyl-L-methionine = N(2)-methylguanosine(2069) in 23S rRNA + S-adenosyl-L-homocysteine + H(+). In terms of biological role, specifically methylates the guanine in position 2445 (m2G2445) and the guanine in position 2069 (m7G2069) of 23S rRNA. The polypeptide is Ribosomal RNA large subunit methyltransferase K/L (Pseudomonas savastanoi pv. phaseolicola (strain 1448A / Race 6) (Pseudomonas syringae pv. phaseolicola (strain 1448A / Race 6))).